Here is a 187-residue protein sequence, read N- to C-terminus: dITP/XTP pyrophosphatase (187 aa).

7 to 12 (TNNPYK) is a substrate binding site. Glutamate 36 and aspartate 65 together coordinate Mg(2+). Aspartate 65 (proton acceptor) is an active-site residue. Substrate-binding positions include threonine 66, 140 to 143 (FGYD), lysine 163, and 168 to 169 (HR).

Belongs to the HAM1 NTPase family. In terms of assembly, homodimer. Mg(2+) is required as a cofactor.

It catalyses the reaction XTP + H2O = XMP + diphosphate + H(+). The catalysed reaction is dITP + H2O = dIMP + diphosphate + H(+). It carries out the reaction ITP + H2O = IMP + diphosphate + H(+). Its function is as follows. Pyrophosphatase that catalyzes the hydrolysis of nucleoside triphosphates to their monophosphate derivatives, with a high preference for the non-canonical purine nucleotides XTP (xanthosine triphosphate), dITP (deoxyinosine triphosphate) and ITP. Seems to function as a house-cleaning enzyme that removes non-canonical purine nucleotides from the nucleotide pool, thus preventing their incorporation into DNA/RNA and avoiding chromosomal lesions. This Pyrobaculum aerophilum (strain ATCC 51768 / DSM 7523 / JCM 9630 / CIP 104966 / NBRC 100827 / IM2) protein is dITP/XTP pyrophosphatase.